Here is a 679-residue protein sequence, read N- to C-terminus: Protein FAM178B (679 aa).

The segment at 70–113 is disordered; sequence PLDQGPRCPARRPCSPASAPAPTSPKKPKIQAPGETFPTDWSPP. The span at 75–90 shows a compositional bias: low complexity; that stretch reads PRCPARRPCSPASAPA.

Belongs to the FAM178 family.

This Homo sapiens (Human) protein is Protein FAM178B.